Consider the following 286-residue polypeptide: Phosphate import ATP-binding protein PstB (286 aa).

An ABC transporter domain is found at 40-281 (VVAKDFSIFY…PRDRMTEDYI (242 aa)). 72–79 (GPSGCGKS) contributes to the ATP binding site.

The protein belongs to the ABC transporter superfamily. Phosphate importer (TC 3.A.1.7) family. As to quaternary structure, the complex is composed of two ATP-binding proteins (PstB), two transmembrane proteins (PstC and PstA) and a solute-binding protein (PstS).

The protein localises to the cell inner membrane. It catalyses the reaction phosphate(out) + ATP + H2O = ADP + 2 phosphate(in) + H(+). Its function is as follows. Part of the ABC transporter complex PstSACB involved in phosphate import. Responsible for energy coupling to the transport system. This is Phosphate import ATP-binding protein PstB from Chlorobium luteolum (strain DSM 273 / BCRC 81028 / 2530) (Pelodictyon luteolum).